The primary structure comprises 227 residues: Potassium/proton antiporter CemA (227 aa).

4 helical membrane passes run 5–25 (SISL…SFTF), 112–132 (IICF…LILI), 143–163 (LSDT…IGFH), and 187–207 (IISG…KYWI).

It belongs to the CemA family.

Its subcellular location is the plastid. The protein resides in the chloroplast inner membrane. It carries out the reaction K(+)(in) + H(+)(out) = K(+)(out) + H(+)(in). Contributes to K(+)/H(+) antiport activity by supporting proton efflux to control proton extrusion and homeostasis in chloroplasts in a light-dependent manner to modulate photosynthesis. Prevents excessive induction of non-photochemical quenching (NPQ) under continuous-light conditions. Indirectly promotes efficient inorganic carbon uptake into chloroplasts. The protein is Potassium/proton antiporter CemA of Phaseolus vulgaris (Kidney bean).